A 500-amino-acid polypeptide reads, in one-letter code: Recombining binding protein suppressor of hairless (500 aa).

A disordered region spans residues 1-30 (MDHTEGSPAEEPPAHAPSPGKFGERPPPKR). 2 DNA-binding regions span residues 57–67 (QKSYGNEKRFF) and 165–170 (SKPSKK). K175 carries the post-translational modification N6-acetyllysine. The segment at 192–197 (RLRSQT) is DNA-binding. The 91-residue stretch at 355 to 445 (PVVESLQLNG…YSTSLTFTYT (91 aa)) folds into the IPT/TIG domain. The span at 465-481 (SSQVPPNESNTNSEGSY) shows a compositional bias: polar residues. Residues 465-500 (SSQVPPNESNTNSEGSYTNASTNSTSVTSSTATVVS) form a disordered region. A compositionally biased stretch (low complexity) spans 482–500 (TNASTNSTSVTSSTATVVS).

The protein belongs to the Su(H) family. Interacts with activated NOTCH1, NOTCH2 or NOTCH3. Interacts with MINT/SHARP. This interaction may mediate the recruitment of large corepressor complexes containing proteins such as HDAC1, HDAC2, NCOR2, SAP30, FHL1/KYOT2 and CIR1. Interacts with EP300, MAML1 and PTF1A. Interacts with RITA1/C12orf52, leading to nuclear export, prevent the interaction between RBPJ and NICD product and subsequent down-regulation of the Notch signaling pathway. Interacts with SNW1. Interacts with CHCHD2 and CXXC5. Interacts with BEND6 (via BEN domain). Interacts with NKAPL. Interacts with ZMIZ1. Interacts with RBM15. Interacts with L3MBTL3 and KDM1A; the interaction with KDM1A is weaker in the absence of L3MBTL3 and the interaction with L3MBTL3 is impaired by Notch-derived peptide containing the intracellular domain (NICD). In terms of assembly, (Microbial infection) Interacts with EBV EBNA2. Interacts with EBV EBNA3. Interacts with EBV EBNA4. Interacts with EBV EBNA6 (via N-terminus).

The protein localises to the nucleus. It localises to the cytoplasm. Transcriptional regulator that plays a central role in Notch signaling, a signaling pathway involved in cell-cell communication that regulates a broad spectrum of cell-fate determinations. Acts as a transcriptional repressor when it is not associated with Notch proteins. When associated with some NICD product of Notch proteins (Notch intracellular domain), it acts as a transcriptional activator that activates transcription of Notch target genes. Probably represses or activates transcription via the recruitment of chromatin remodeling complexes containing histone deacetylase or histone acetylase proteins, respectively. Specifically binds to the immunoglobulin kappa-type J segment recombination signal sequence. Binds specifically to methylated DNA. Binds to the oxygen responsive element of COX4I2 and activates its transcription under hypoxia conditions (4% oxygen). Negatively regulates the phagocyte oxidative burst in response to bacterial infection by repressing transcription of NADPH oxidase subunits. The sequence is that of Recombining binding protein suppressor of hairless from Homo sapiens (Human).